Reading from the N-terminus, the 235-residue chain is MSDLASEGSDPAERASEHSNGNAPADRPARRSGDQAVADAAERAKATGSRNIPVLPDLPLPEDTANLRLGPDLSPAMLALLPMVGVWRGEGEGNDPARGDYRFGQQIIVSHDGGDYLSWESRSWFIEADGSYGGPDLRETGFWRVGVDGDDEVIELLLTHSSGIVELFYGTALTQSSWELATDVVIRSQSGVVVGGAKRLYGIVEGGDLAYVEERVVADGPLEPRLSARLQRYIG.

A disordered region spans residues 1 to 59 (MSDLASEGSDPAERASEHSNGNAPADRPARRSGDQAVADAAERAKATGSRNIPVLPDLP). The short motif at 85 to 91 (GVWRGEG) is the GXWXGXG element.

It belongs to the nitrobindin family.

This chain is Ferric nitrobindin-like protein, found in Nocardia farcinica (strain IFM 10152).